Here is a 262-residue protein sequence, read N- to C-terminus: Acyl-[acyl-carrier-protein]--UDP-N-acetylglucosamine O-acyltransferase (262 aa).

This sequence belongs to the transferase hexapeptide repeat family. LpxA subfamily. In terms of assembly, homotrimer.

It is found in the cytoplasm. The catalysed reaction is a (3R)-hydroxyacyl-[ACP] + UDP-N-acetyl-alpha-D-glucosamine = a UDP-3-O-[(3R)-3-hydroxyacyl]-N-acetyl-alpha-D-glucosamine + holo-[ACP]. It functions in the pathway glycolipid biosynthesis; lipid IV(A) biosynthesis; lipid IV(A) from (3R)-3-hydroxytetradecanoyl-[acyl-carrier-protein] and UDP-N-acetyl-alpha-D-glucosamine: step 1/6. In terms of biological role, involved in the biosynthesis of lipid A, a phosphorylated glycolipid that anchors the lipopolysaccharide to the outer membrane of the cell. This chain is Acyl-[acyl-carrier-protein]--UDP-N-acetylglucosamine O-acyltransferase, found in Vibrio parahaemolyticus serotype O3:K6 (strain RIMD 2210633).